The following is a 725-amino-acid chain: Consortin (725 aa).

Disordered stretches follow at residues M1–N72, G103–I124, L296–V353, T375–D397, and Q485–L510. Topologically, residues M1–S664 are cytoplasmic. The segment covering V63–N72 has biased composition (polar residues). Residues P109–A121 are compositionally biased toward basic residues. Basic and acidic residues predominate over residues E300 to S314. Composition is skewed to polar residues over residues D343–V353 and T375–D388. Residues C665 to L685 traverse the membrane as a helical segment. The Extracellular portion of the chain corresponds to Y686–S725.

The protein belongs to the CNST family. In terms of assembly, interacts with connexins GJA1/CX43, GJB1/CX32, GJB2/CX26, GJB3/CX31, GJB6/CX30 and GJC1/CX45. Also interacts with GGA1 and GGA2. Does not interact with PANX1.

Its subcellular location is the cell membrane. The protein resides in the golgi apparatus. It is found in the trans-Golgi network membrane. The protein localises to the cytoplasmic vesicle. It localises to the secretory vesicle. Required for targeting of connexins to the plasma membrane. The protein is Consortin (CNST) of Homo sapiens (Human).